Consider the following 368-residue polypeptide: Glutamate 5-kinase (368 aa).

Residue Lys-10 coordinates ATP. Positions 50, 137, and 149 each coordinate substrate. 169-170 (TD) contributes to the ATP binding site. The region spanning 276–354 (RGTLVLDDGA…ESIVRELGYM (79 aa)) is the PUA domain.

The protein belongs to the glutamate 5-kinase family.

It is found in the cytoplasm. The enzyme catalyses L-glutamate + ATP = L-glutamyl 5-phosphate + ADP. The protein operates within amino-acid biosynthesis; L-proline biosynthesis; L-glutamate 5-semialdehyde from L-glutamate: step 1/2. Functionally, catalyzes the transfer of a phosphate group to glutamate to form L-glutamate 5-phosphate. The polypeptide is Glutamate 5-kinase (Pseudomonas savastanoi pv. phaseolicola (strain 1448A / Race 6) (Pseudomonas syringae pv. phaseolicola (strain 1448A / Race 6))).